We begin with the raw amino-acid sequence, 185 residues long: Early nodulin-like protein 17 (185 aa).

The N-terminal stretch at M1–A21 is a signal peptide. Positions K37–S137 constitute a Phytocyanin domain. N-linked (GlcNAc...) asparagine glycans are attached at residues N79 and N94. C93 and C125 form a disulfide bridge. The tract at residues D136–A155 is disordered. S156 is lipidated: GPI-anchor amidated serine. Residues A157–W185 constitute a propeptide, removed in mature form.

Belongs to the early nodulin-like (ENODL) family. Expressed ubiquitously. Accumulates mainly in anthers, stigmas and ovaries.

Its subcellular location is the cell membrane. Its function is as follows. May act as a carbohydrate transporter. Required for male fertility and seed yield. The protein is Early nodulin-like protein 17 of Oryza sativa subsp. japonica (Rice).